Reading from the N-terminus, the 193-residue chain is Crossover junction endodeoxyribonuclease RuvC (193 aa).

Active-site residues include D7, E68, and D141. Residues D7, E68, and D141 each coordinate Mg(2+).

Belongs to the RuvC family. As to quaternary structure, homodimer which binds Holliday junction (HJ) DNA. The HJ becomes 2-fold symmetrical on binding to RuvC with unstacked arms; it has a different conformation from HJ DNA in complex with RuvA. In the full resolvosome a probable DNA-RuvA(4)-RuvB(12)-RuvC(2) complex forms which resolves the HJ. The cofactor is Mg(2+).

It is found in the cytoplasm. It catalyses the reaction Endonucleolytic cleavage at a junction such as a reciprocal single-stranded crossover between two homologous DNA duplexes (Holliday junction).. Its function is as follows. The RuvA-RuvB-RuvC complex processes Holliday junction (HJ) DNA during genetic recombination and DNA repair. Endonuclease that resolves HJ intermediates. Cleaves cruciform DNA by making single-stranded nicks across the HJ at symmetrical positions within the homologous arms, yielding a 5'-phosphate and a 3'-hydroxyl group; requires a central core of homology in the junction. The consensus cleavage sequence is 5'-(A/T)TT(C/G)-3'. Cleavage occurs on the 3'-side of the TT dinucleotide at the point of strand exchange. HJ branch migration catalyzed by RuvA-RuvB allows RuvC to scan DNA until it finds its consensus sequence, where it cleaves and resolves the cruciform DNA. The protein is Crossover junction endodeoxyribonuclease RuvC of Renibacterium salmoninarum (strain ATCC 33209 / DSM 20767 / JCM 11484 / NBRC 15589 / NCIMB 2235).